The chain runs to 783 residues: Mitochondrial intermediate peptidase (783 aa).

A mitochondrion-targeting transit peptide spans 1–33; that stretch reads MKAGIPLSRCTQRIPLLVARQVSRNITTTTTKF. Zn(2+) is bound at residue histidine 565. Residue glutamate 566 is part of the active site. Zn(2+) is bound by residues histidine 569 and histidine 572.

It belongs to the peptidase M3 family. Zn(2+) serves as cofactor.

Its subcellular location is the mitochondrion matrix. It catalyses the reaction Release of an N-terminal octapeptide as second stage of processing of some proteins imported into the mitochondrion.. Its function is as follows. Cleaves proteins, imported into the mitochondrion, to their mature size. While most mitochondrial precursor proteins are processed to the mature form in one step by mitochondrial processing peptidase (MPP), the sequential cleavage by MIP of an octapeptide after initial processing by MPP is a required step for a subgroup of nuclear-encoded precursor proteins destined for the matrix or the inner membrane. The polypeptide is Mitochondrial intermediate peptidase (OCT1) (Candida albicans (strain SC5314 / ATCC MYA-2876) (Yeast)).